The following is a 501-amino-acid chain: Lysine--tRNA ligase (501 aa).

Mg(2+)-binding residues include E411 and E418.

It belongs to the class-II aminoacyl-tRNA synthetase family. In terms of assembly, homodimer. Mg(2+) serves as cofactor.

The protein localises to the cytoplasm. It carries out the reaction tRNA(Lys) + L-lysine + ATP = L-lysyl-tRNA(Lys) + AMP + diphosphate. The protein is Lysine--tRNA ligase of Clostridium perfringens (strain ATCC 13124 / DSM 756 / JCM 1290 / NCIMB 6125 / NCTC 8237 / Type A).